The sequence spans 66 residues: UPF0150 protein AF_0072.1 (66 aa).

This sequence belongs to the UPF0150 family.

This Archaeoglobus fulgidus (strain ATCC 49558 / DSM 4304 / JCM 9628 / NBRC 100126 / VC-16) protein is UPF0150 protein AF_0072.1.